Consider the following 103-residue polypeptide: Small ribosomal subunit protein uS10 (103 aa).

Belongs to the universal ribosomal protein uS10 family. As to quaternary structure, part of the 30S ribosomal subunit.

Its function is as follows. Involved in the binding of tRNA to the ribosomes. This Sphingopyxis alaskensis (strain DSM 13593 / LMG 18877 / RB2256) (Sphingomonas alaskensis) protein is Small ribosomal subunit protein uS10.